Consider the following 953-residue polypeptide: Coatomer subunit beta (953 aa).

Residue Thr-2 is modified to N-acetylthreonine. HEAT repeat units follow at residues 96 to 131, 132 to 168, 240 to 276, 277 to 314, 316 to 353, and 396 to 433; these read HEMILVCDAYRKDLQHPNEFIRGSTLRFLCKLKEAE, LLEPLMPAIRACLEHRHSYVRRNAVLAIYTIYRNFEH, SERARFIRCIYNLLQSSSPAVKYEAAGTLVTLSSAPT, AIKAAAQCYIDLIIKESDNNVKLIVLDRLIELKEHPAH, RVLQDLVMDILRVLSTPDLEVRKKTLQLALDLVSSRNV, and DMAANVIPVLMEFLSDNNEAAAADVLEFVREAIQRFDN. Lys-494 bears the N6-acetyllysine mark.

As to quaternary structure, oligomeric complex that consists of at least the alpha, beta, beta', gamma, delta, epsilon and zeta subunits. Interacts with SCYL1. Interacts with COPG1. Interacts (via trunk domain) with ARF1 (via switch I region); the interaction is direct. Interacts with KCNK2/TREK (via N-terminus); this interaction increases the channel-mediated whole cell currents and promotes plasma membrane expression of KCNK2/TREK. Interacts with anthrax lethal factor (LF); this interaction may facilitate endosomal vesicle membrane translocation of LF and its release from the lumen of endosomal vesicles to external milieu. Interacts with CAPN8 and PRKCE. Interacts with ARF1 (myristoylated); this interaction is required for binding of COPB1 to Golgi membranes. Interacts with STX17. Interacts with TMEM115. Interacts with HLA-G-B2M complex; this interaction mediates the endoplasmic reticulum (ER) retrieval of HLA-E-B2M complexes that bind low affinity peptides. Interacts with TMEM41B. (Microbial infection) Interacts (via C-terminus) with HIV-1 Nef; the interaction is direct. Proteolytically cleaved between Ser-528 and Ser-529 by CAPN8.

The protein localises to the cytoplasm. Its subcellular location is the golgi apparatus membrane. It is found in the cytoplasmic vesicle. The protein resides in the COPI-coated vesicle membrane. It localises to the cell membrane. The protein localises to the endoplasmic reticulum-Golgi intermediate compartment. In terms of biological role, the coatomer is a cytosolic protein complex that binds to dilysine motifs and reversibly associates with Golgi non-clathrin-coated vesicles, which further mediate biosynthetic protein transport from the ER, via the Golgi up to the trans Golgi network. Coatomer complex is required for budding from Golgi membranes, and is essential for the retrograde Golgi-to-ER transport of dilysine-tagged proteins. In mammals, the coatomer can only be recruited by membranes associated to ADP-ribosylation factors (ARFs), which are small GTP-binding proteins; the complex also influences the Golgi structural integrity, as well as the processing, activity, and endocytic recycling of LDL receptors. Plays a functional role in facilitating the transport of kappa-type opioid receptor mRNAs into axons and enhances translation of these proteins. Required for limiting lipid storage in lipid droplets. Involved in lipid homeostasis by regulating the presence of perilipin family members PLIN2 and PLIN3 at the lipid droplet surface and promoting the association of adipocyte surface triglyceride lipase (PNPLA2) with the lipid droplet to mediate lipolysis. Involved in the Golgi disassembly and reassembly processes during cell cycle. Involved in autophagy by playing a role in early endosome function. Plays a role in organellar compartmentalization of secretory compartments including endoplasmic reticulum (ER)-Golgi intermediate compartment (ERGIC), Golgi, trans-Golgi network (TGN) and recycling endosomes, and in biosynthetic transport of CAV1. Promotes degradation of Nef cellular targets CD4 and MHC class I antigens by facilitating their trafficking to degradative compartments. This Homo sapiens (Human) protein is Coatomer subunit beta.